Reading from the N-terminus, the 582-residue chain is V-type ATP synthase alpha chain (582 aa).

231-238 (GPFGSGKT) is an ATP binding site.

This sequence belongs to the ATPase alpha/beta chains family.

The catalysed reaction is ATP + H2O + 4 H(+)(in) = ADP + phosphate + 5 H(+)(out). In terms of biological role, produces ATP from ADP in the presence of a proton gradient across the membrane. The V-type alpha chain is a catalytic subunit. This Deinococcus geothermalis (strain DSM 11300 / CIP 105573 / AG-3a) protein is V-type ATP synthase alpha chain.